Consider the following 492-residue polypeptide: Stromelysin-3 (492 aa).

An N-terminal signal peptide occupies residues 1-35 (MARAACLLRAISRVLLLPLPLLLLLLLLLPSPLMA). A propeptide spans 36–101 (RARPPESHRH…VLNARNRQKR (66 aa)) (activation peptide). Residues 82 to 89 (LRCGVPDL) carry the Cysteine switch motif. Residues Cys-84, His-168, and Asp-170 each contribute to the Zn(2+) site. Residues Asp-175, Gly-176, Gly-178, and Ile-180 each coordinate Ca(2+). Zn(2+)-binding residues include His-183, His-196, and His-219. Residue Glu-220 is part of the active site. Residues His-223 and His-229 each coordinate Zn(2+). Hemopexin repeat units lie at residues 295–343 (PDVC…WQGL), 344–386 (PSPV…KLGL), 388–436 (GSPV…WRGV), and 437–484 (PSEI…FFDC). An intrachain disulfide couples Cys-298 to Cys-484.

It belongs to the peptidase M10A family. The cofactor is Ca(2+). It depends on Zn(2+) as a cofactor. Post-translationally, the precursor is cleaved by a furin endopeptidase. In terms of tissue distribution, specifically expressed in the mammary gland during apoptosis.

The protein resides in the secreted. It localises to the extracellular space. Its subcellular location is the extracellular matrix. May play an important role in the progression of epithelial malignancies. This Mus musculus (Mouse) protein is Stromelysin-3 (Mmp11).